Here is a 976-residue protein sequence, read N- to C-terminus: Apical junction component 1 homolog (976 aa).

Positions 21 to 49 (ATPGPASKCSPCERSVARPAEPAPFNKRH) are disordered. Ser52 is subject to Phosphoserine. Disordered stretches follow at residues 61–136 (GPAM…EPAY), 220–242 (PQFH…PTPS), and 264–294 (YAER…RGSF). The segment covering 98–113 (RAPPGLTPAPASPPVL) has biased composition (pro residues). A compositionally biased stretch (basic and acidic residues) spans 116–134 (RGREAQRAARAEASPRREP). Phosphoserine is present on Ser129. Omega-N-methylarginine is present on Arg322. The interval 412 to 443 (LQVVPPSDPDPLLASWHGGTGTSPPRLATDSR) is disordered. Phosphoserine occurs at positions 468, 509, and 512. Disordered stretches follow at residues 539-574 (DLRA…SGRQ) and 614-660 (LDSR…ADED). Composition is skewed to low complexity over residues 616–625 (SRPAGSGAPA) and 633–655 (PASA…SPEP). An Asymmetric dimethylarginine; alternate modification is found at Arg749. The residue at position 749 (Arg749) is an Omega-N-methylarginine; alternate. The segment at 855 to 888 (GSPARPPPARSREPDMETLILTPPPGTAGLDQDG) is disordered.

The protein localises to the apical cell membrane. It is found in the cell projection. The protein resides in the cilium. Its subcellular location is the cell junction. It localises to the adherens junction. Functionally, may be involved in the control of adherens junction integrity. This is Apical junction component 1 homolog from Homo sapiens (Human).